Reading from the N-terminus, the 627-residue chain is BURP domain-containing protein 12 (627 aa).

Positions Met1–Gly25 are cleaved as a signal peptide. Residues Asn119, Asn175, Asn251, Asn366, Asn384, and Asn530 are each glycosylated (N-linked (GlcNAc...) asparagine). In terms of domain architecture, BURP spans Phe415–Ala626.

Expressed in stems, leaves, shoot and panicles.

The polypeptide is BURP domain-containing protein 12 (BURP12) (Oryza sativa subsp. japonica (Rice)).